We begin with the raw amino-acid sequence, 1044 residues long: Pre-mRNA-splicing factor ATP-dependent RNA helicase DHX16 (1044 aa).

Disordered stretches follow at residues 101 to 210 (EDSE…AYEE) and 374 to 394 (LQGN…QKES). Ser-103, Ser-106, and Ser-107 each carry phosphoserine. Residues 119-130 (QKKRKKRKHLRK) show a composition bias toward basic residues. Positions 134 to 143 (EEEEEEEEEA) are enriched in acidic residues. The residue at position 163 (Ser-163) is a Phosphoserine. The span at 169–210 (RTERERLQDLEERDAFAERVRQRDKDRTRNVLERSDKKAYEE) shows a compositional bias: basic and acidic residues. The Helicase ATP-binding domain occupies 412 to 576 (LAAIANHQVL…FDDAPVFRIP (165 aa)). Position 425–432 (425–432 (GETGSGKT)) interacts with ATP. The DEAH box motif lies at 523–526 (DEAH). The Helicase C-terminal domain occupies 601 to 774 (SVLQIHVTQP…NVVLLLKSLG (174 aa)). Position 715 is a phosphothreonine (Thr-715).

The protein belongs to the DEAD box helicase family. DEAH subfamily. DDX16/PRP8 sub-subfamily. As to quaternary structure, component of pre-catalytic spliceosome complexes. Component of the minor spliceosome, which splices U12-type introns. Interacts with GPKOW. Interacts with TRIM6. Interacts with RIGI.

It is found in the nucleus. The protein resides in the nucleoplasm. It localises to the cytoplasm. The enzyme catalyses ATP + H2O = ADP + phosphate + H(+). Its function is as follows. Required for pre-mRNA splicing as a component of the spliceosome. Contributes to pre-mRNA splicing after spliceosome formation and prior to the first transesterification reaction. As a component of the minor spliceosome, involved in the splicing of U12-type introns in pre-mRNAs. Also plays a role in innate antiviral response by acting as a pattern recognition receptor sensing splicing signals in viral RNA. Mechanistically, TRIM6 promotes the interaction between unanchored 'Lys-48'-polyubiquitin chains and DHX16, leading to DHX16 interaction with RIGI and ssRNA to amplify RIGI-dependent innate antiviral immune responses. In Pan troglodytes (Chimpanzee), this protein is Pre-mRNA-splicing factor ATP-dependent RNA helicase DHX16 (DHX16).